A 180-amino-acid chain; its full sequence is Putative 5'(3')-deoxyribonucleotidase (180 aa).

Residue Asp-9 is the Nucleophile of the active site. 3 residues coordinate Mg(2+): Asp-9, Asp-11, and Asp-135. Asp-11 functions as the Proton donor in the catalytic mechanism.

Belongs to the 5'(3')-deoxyribonucleotidase family. Mg(2+) is required as a cofactor.

Its function is as follows. Dephosphorylates the 5' and 2'(3')-phosphates of deoxyribonucleotides. This chain is Putative 5'(3')-deoxyribonucleotidase, found in Staphylococcus aureus (strain MSSA476).